A 611-amino-acid polypeptide reads, in one-letter code: V-type proton ATPase catalytic subunit A (611 aa).

Glycine 244–threonine 251 is a binding site for ATP.

This sequence belongs to the ATPase alpha/beta chains family. As to quaternary structure, V-ATPase is a heteromultimeric enzyme made up of two complexes: the ATP-hydrolytic V1 complex and the proton translocation V0 complex. The V1 complex consists of three catalytic AB heterodimers that form a heterohexamer, three peripheral stalks each consisting of EG heterodimers, one central rotor including subunits D and F, and the regulatory subunits C and H. The proton translocation complex V0 consists of the proton transport subunit a, a ring of proteolipid subunits c9c'', rotary subunit d and subunit e.

It localises to the cell membrane. It is found in the vacuole. Its subcellular location is the vesicle. It carries out the reaction ATP + H2O + 4 H(+)(in) = ADP + phosphate + 5 H(+)(out). With respect to regulation, ATP hydrolysis occurs at the interface between the nucleotide-binding domains of subunits A and B. ATP hydrolysis triggers a conformational change in the subunits D and F, which induces a shift of subunit d. The c-ring is subsequently rotated and results in a continuous proton translocation across the membrane. Catalytic subunit of the V1 complex of vacuolar(H+)-ATPase (V-ATPase), a multisubunit enzyme composed of a peripheral complex (V1) that hydrolyzes ATP and a membrane integral complex (V0) that translocates protons. V-ATPase is responsible for acidifying and maintaining the pH of intracellular compartments and in some cell types, is targeted to the plasma membrane, where it is responsible for acidifying the extracellular environment. During the trophozoite stage, involved in the acidification of the extracellular space next to the cell membrane. The chain is V-type proton ATPase catalytic subunit A from Plasmodium falciparum (isolate 3D7).